The primary structure comprises 223 residues: 7-cyano-7-deazaguanine synthase (223 aa).

An ATP-binding site is contributed by 15 to 25; it reads FSGGQDSTTCL. Zn(2+) contacts are provided by cysteine 191, cysteine 200, cysteine 203, and cysteine 206.

Belongs to the QueC family. In terms of assembly, homodimer. It depends on Zn(2+) as a cofactor.

The enzyme catalyses 7-carboxy-7-deazaguanine + NH4(+) + ATP = 7-cyano-7-deazaguanine + ADP + phosphate + H2O + H(+). Its pathway is purine metabolism; 7-cyano-7-deazaguanine biosynthesis. Functionally, catalyzes the ATP-dependent conversion of 7-carboxy-7-deazaguanine (CDG) to 7-cyano-7-deazaguanine (preQ(0)). This Staphylococcus haemolyticus (strain JCSC1435) protein is 7-cyano-7-deazaguanine synthase.